Here is a 478-residue protein sequence, read N- to C-terminus: Protein ZINC INDUCED FACILITATOR-LIKE 1 (478 aa).

12 consecutive transmembrane segments (helical) span residues 43–63, 81–101, 108–128, 130–150, 169–189, 208–228, 280–300, 317–337, 346–367, 378–398, 415–435, and 453–473; these read IIVL…YFMI, FVGC…GLVA, PVIL…GLSL, FWMA…LGPI, AVST…GFLA, FPFF…TIVS, IIVY…FSLW, VGSV…SLYS, IIVT…PLIA, VTSA…GLFI, IAMT…GIIF, and VFFI…KPFL.

It belongs to the major facilitator superfamily. Predominantly expressed in roots and stomatal guard cells. Detected in anther stamen filaments and shoot apical meristem. In the mature portion of roots, restricted to the cortex. At the root tip, highly expressed in both the cortical and epidermal cell layers of the apical meristem and the transition zone, while absent from the quiescent center or the columella cells. Not detected in lateral root primordia.

Its subcellular location is the cell membrane. The protein localises to the vacuole membrane. Its function is as follows. Major facilitator superfamily (MFS) transporter probably involved in 2,4-dichlorophenoxyacetic acid (2,4-D) export. K(+) may be the physiological substrate of the transporter. Modulates root auxin-related processes. Involved in auxin efflux and acts as a positive regulator of shootward transport at the root apex. May mediate proton efflux from the vacuolar compartment. In terms of biological role, mediates drought stress tolerance by regulating stomatal closure. This is Protein ZINC INDUCED FACILITATOR-LIKE 1 (ZIFL1) from Arabidopsis thaliana (Mouse-ear cress).